The sequence spans 541 residues: Light-independent protochlorophyllide reductase subunit B (541 aa).

Residue D36 participates in [4Fe-4S] cluster binding. The active-site Proton donor is the D290. 425–426 (GL) is a substrate binding site.

It belongs to the ChlB/BchB/BchZ family. As to quaternary structure, protochlorophyllide reductase is composed of three subunits; ChlL, ChlN and ChlB. Forms a heterotetramer of two ChlB and two ChlN subunits. Requires [4Fe-4S] cluster as cofactor.

It catalyses the reaction chlorophyllide a + oxidized 2[4Fe-4S]-[ferredoxin] + 2 ADP + 2 phosphate = protochlorophyllide a + reduced 2[4Fe-4S]-[ferredoxin] + 2 ATP + 2 H2O. It functions in the pathway porphyrin-containing compound metabolism; chlorophyll biosynthesis (light-independent). In terms of biological role, component of the dark-operative protochlorophyllide reductase (DPOR) that uses Mg-ATP and reduced ferredoxin to reduce ring D of protochlorophyllide (Pchlide) to form chlorophyllide a (Chlide). This reaction is light-independent. The NB-protein (ChlN-ChlB) is the catalytic component of the complex. The chain is Light-independent protochlorophyllide reductase subunit B from Synechococcus sp. (strain CC9902).